We begin with the raw amino-acid sequence, 66 residues long: Putative inactive (E)-beta-ocimene synthase, chloroplastic (66 aa).

The N-terminal 25 residues, 1-25 (MAAHNLCFNSAFVCNVHHQKTQHFP), are a transit peptide targeting the chloroplast.

This sequence belongs to the terpene synthase family. Tpsb subfamily. Expressed exclusively in flowers.

The protein localises to the plastid. The protein resides in the chloroplast. This Arabidopsis thaliana (Mouse-ear cress) protein is Putative inactive (E)-beta-ocimene synthase, chloroplastic (TPS02).